The following is a 166-amino-acid chain: Lipoprotein signal peptidase (166 aa).

Transmembrane regions (helical) follow at residues 12–32, 70–90, and 102–122; these read WLWV…LILQ, WFFS…MYRS, and ALII…GFVV. Catalysis depends on residues Asp-123 and Asp-141. A helical transmembrane segment spans residues 137–157; the sequence is FNLADSAICIGAALIVLEGFL.

The protein belongs to the peptidase A8 family.

The protein resides in the cell inner membrane. It carries out the reaction Release of signal peptides from bacterial membrane prolipoproteins. Hydrolyzes -Xaa-Yaa-Zaa-|-(S,diacylglyceryl)Cys-, in which Xaa is hydrophobic (preferably Leu), and Yaa (Ala or Ser) and Zaa (Gly or Ala) have small, neutral side chains.. The protein operates within protein modification; lipoprotein biosynthesis (signal peptide cleavage). This protein specifically catalyzes the removal of signal peptides from prolipoproteins. The polypeptide is Lipoprotein signal peptidase (Klebsiella pneumoniae subsp. pneumoniae (strain ATCC 700721 / MGH 78578)).